A 125-amino-acid polypeptide reads, in one-letter code: Glycine cleavage system H protein 1 (125 aa).

The 82-residue stretch at 22-103 folds into the Lipoyl-binding domain; sequence KAYIGITDYA…PYGSWLVAVR (82 aa). At Lys-63 the chain carries N6-lipoyllysine.

The protein belongs to the GcvH family. The glycine cleavage system is composed of four proteins: P, T, L and H. Requires (R)-lipoate as cofactor.

Its function is as follows. The glycine cleavage system catalyzes the degradation of glycine. The H protein shuttles the methylamine group of glycine from the P protein to the T protein. This Caldanaerobacter subterraneus subsp. tengcongensis (strain DSM 15242 / JCM 11007 / NBRC 100824 / MB4) (Thermoanaerobacter tengcongensis) protein is Glycine cleavage system H protein 1.